The sequence spans 84 residues: Acid stress protein IbaG (84 aa).

Belongs to the BolA/IbaG family.

Involved in cell resistance against acid stress. This is Acid stress protein IbaG from Escherichia coli O6:H1 (strain CFT073 / ATCC 700928 / UPEC).